A 274-amino-acid polypeptide reads, in one-letter code: Formamidopyrimidine-DNA glycosylase (274 aa).

Catalysis depends on Pro2, which acts as the Schiff-base intermediate with DNA. Glu3 serves as the catalytic Proton donor. Lys57 functions as the Proton donor; for beta-elimination activity in the catalytic mechanism. DNA is bound by residues His90, Arg109, and Lys150. The segment at 235-269 adopts an FPG-type zinc-finger fold; it reads FVYGRKDKACLICGHTIESIKQGQRSTFFCRHCQH. Arg259 (proton donor; for delta-elimination activity) is an active-site residue.

It belongs to the FPG family. In terms of assembly, monomer. The cofactor is Zn(2+).

It carries out the reaction Hydrolysis of DNA containing ring-opened 7-methylguanine residues, releasing 2,6-diamino-4-hydroxy-5-(N-methyl)formamidopyrimidine.. The enzyme catalyses 2'-deoxyribonucleotide-(2'-deoxyribose 5'-phosphate)-2'-deoxyribonucleotide-DNA = a 3'-end 2'-deoxyribonucleotide-(2,3-dehydro-2,3-deoxyribose 5'-phosphate)-DNA + a 5'-end 5'-phospho-2'-deoxyribonucleoside-DNA + H(+). Its function is as follows. Involved in base excision repair of DNA damaged by oxidation or by mutagenic agents. Acts as a DNA glycosylase that recognizes and removes damaged bases. Has a preference for oxidized purines, such as 7,8-dihydro-8-oxoguanine (8-oxoG). Has AP (apurinic/apyrimidinic) lyase activity and introduces nicks in the DNA strand. Cleaves the DNA backbone by beta-delta elimination to generate a single-strand break at the site of the removed base with both 3'- and 5'-phosphates. The sequence is that of Formamidopyrimidine-DNA glycosylase from Proteus mirabilis (strain HI4320).